The chain runs to 44 residues: 2S seed storage albumin protein (44 aa).

2 cysteine pairs are disulfide-bonded: Cys-7–Cys-42 and Cys-19–Cys-31.

It belongs to the 2S seed storage albumins family. The mature protein consists of a small and a large chain linked by 2 disulfide bonds.

Its function is as follows. This is a 2S seed storage protein. Has antifungal activity. Inhibits spore germination in H.sativum (IC(50)=62.5 ug/ml) and P.betae (IC(50)=62.5 ug/ml). Inhibits growth of H.sativum, V.albo-atrum and P.infestans. The chain is 2S seed storage albumin protein from Taraxacum officinale (Common dandelion).